A 322-amino-acid polypeptide reads, in one-letter code: RNA-binding motif protein, X-linked 2 (322 aa).

K8 participates in a covalent cross-link: Glycyl lysine isopeptide (Lys-Gly) (interchain with G-Cter in SUMO2). The RRM domain maps to 36-114; sequence AWIFLGGLPY…RTIRVDHVSN (79 aa). Positions 134–322 are disordered; that stretch reads KGCGARTPSP…SSNPSDRWRH (189 aa). Phosphothreonine is present on T140. A Phosphoserine modification is found at S149. The span at 155–171 shows a compositional bias: basic residues; that stretch reads TKKHKKDKKEKKKKKKE. 2 positions are modified to phosphoserine: S186 and S188. Residues 195–223 show a composition bias toward basic and acidic residues; the sequence is KEKDDTGPKKHSSKNSERAQKSEPREGQK. Residue S232 is modified to Phosphoserine. The segment covering 240–274 has biased composition (basic and acidic residues); the sequence is RELKKEKPKHEHKSSSRREAREEKTRIRDRGRSSD. K243 participates in a covalent cross-link: Glycyl lysine isopeptide (Lys-Gly) (interchain with G-Cter in SUMO2). S272 is subject to Phosphoserine. The segment covering 289-308 has biased composition (basic residues); it reads YRSRSRSRDKSHRHKRARRS. The residue at position 314 (S314) is a Phosphoserine.

Belongs to the IST3 family. Part of the activated spliceosome B/catalytic step 1 spliceosome, one of the forms of the spliceosome which has a well-formed active site but still cannot catalyze the branching reaction and is composed of at least 52 proteins, the U2, U5 and U6 snRNAs and the pre-mRNA. Component of the minor spliceosome, which splices U12-type introns.

Its subcellular location is the nucleus. In terms of biological role, involved in pre-mRNA splicing as component of the activated spliceosome. As a component of the minor spliceosome, involved in the splicing of U12-type introns in pre-mRNAs. This chain is RNA-binding motif protein, X-linked 2 (RBMX2), found in Homo sapiens (Human).